A 315-amino-acid chain; its full sequence is Ribonuclease Z (315 aa).

Zn(2+) is bound by residues His-61, His-63, Asp-65, His-66, His-151, Asp-219, and His-278. The Proton acceptor role is filled by Asp-65.

This sequence belongs to the RNase Z family. In terms of assembly, homodimer. Requires Zn(2+) as cofactor.

It carries out the reaction Endonucleolytic cleavage of RNA, removing extra 3' nucleotides from tRNA precursor, generating 3' termini of tRNAs. A 3'-hydroxy group is left at the tRNA terminus and a 5'-phosphoryl group is left at the trailer molecule.. Its function is as follows. Zinc phosphodiesterase, which displays some tRNA 3'-processing endonuclease activity. Probably involved in tRNA maturation, by removing a 3'-trailer from precursor tRNA. The polypeptide is Ribonuclease Z (Clostridium botulinum (strain Eklund 17B / Type B)).